The primary structure comprises 215 residues: Thymidylate kinase (215 aa).

An ATP-binding site is contributed by 12 to 19; that stretch reads GIDGAGKS.

The protein belongs to the thymidylate kinase family.

The catalysed reaction is dTMP + ATP = dTDP + ADP. In terms of biological role, phosphorylation of dTMP to form dTDP in both de novo and salvage pathways of dTTP synthesis. The protein is Thymidylate kinase of Albidiferax ferrireducens (strain ATCC BAA-621 / DSM 15236 / T118) (Rhodoferax ferrireducens).